A 341-amino-acid chain; its full sequence is Hydrogenase expression/formation protein HupE (341 aa).

The protein belongs to the HypE family.

Its function is as follows. May be involved in the maturation of the NifE hydrogenase. The protein is Hydrogenase expression/formation protein HupE (hupE) of Azotobacter chroococcum mcd 1.